The following is a 210-amino-acid chain: Cytidylate kinase (210 aa).

7 to 15 (GPAASGKGT) serves as a coordination point for ATP.

Belongs to the cytidylate kinase family. Type 1 subfamily.

The protein localises to the cytoplasm. It carries out the reaction CMP + ATP = CDP + ADP. It catalyses the reaction dCMP + ATP = dCDP + ADP. This chain is Cytidylate kinase, found in Methylobacterium sp. (strain 4-46).